The chain runs to 367 residues: Glutamate 5-kinase (367 aa).

Lys-9 is a binding site for ATP. Substrate is bound by residues Ser-49, Asp-136, and Asn-148. Residues Thr-168–Asp-169 and Thr-210–Lys-216 contribute to the ATP site. Residues Ser-276–Arg-350 enclose the PUA domain.

Belongs to the glutamate 5-kinase family.

Its subcellular location is the cytoplasm. The catalysed reaction is L-glutamate + ATP = L-glutamyl 5-phosphate + ADP. Its pathway is amino-acid biosynthesis; L-proline biosynthesis; L-glutamate 5-semialdehyde from L-glutamate: step 1/2. Functionally, catalyzes the transfer of a phosphate group to glutamate to form L-glutamate 5-phosphate. In Bacillus cereus (strain G9842), this protein is Glutamate 5-kinase.